Here is a 781-residue protein sequence, read N- to C-terminus: Isoquinoline 1-oxidoreductase subunit beta (781 aa).

In terms of assembly, heterodimer of an alpha chain and a beta chain.

It catalyses the reaction isoquinoline + A + H2O = isoquinolin-1(2H)-one + AH2. Its function is as follows. Specific towards N-containing N-heterocyclic substrates, including isoquinoline, isoquinolin-5-ol, phthalazine and quinazoline. In Brevundimonas diminuta (Pseudomonas diminuta), this protein is Isoquinoline 1-oxidoreductase subunit beta (iorB).